The primary structure comprises 124 residues: Protein YebF (124 aa).

Residues 1–27 form the signal peptide; the sequence is MKTCHIINRVGLSGVALLLTVSFTVSA. The 88-residue stretch at 36-123 folds into the YebF/Cmi domain; the sequence is KFISCDNLTK…QQNTISYSEL (88 aa). Cys-40 and Cys-113 are joined by a disulfide.

The protein belongs to the YebF family.

It localises to the secreted. In Photorhabdus laumondii subsp. laumondii (strain DSM 15139 / CIP 105565 / TT01) (Photorhabdus luminescens subsp. laumondii), this protein is Protein YebF.